The sequence spans 98 residues: MASTLKLFMLLPVILLLLQEAYGTIDVEARGDNFNCNKREGPCSQRSLCECDPNLQLGRHSDQLWHYNLRTNRCERGGYRDNCNSHTSSGACVMACER.

The signal sequence occupies residues 1 to 23 (MASTLKLFMLLPVILLLLQEAYG). Intrachain disulfides connect cysteine 36-cysteine 51, cysteine 43-cysteine 83, cysteine 49-cysteine 96, and cysteine 74-cysteine 92.

In terms of assembly, monomer. As to expression, expressed in salivary glands.

Its subcellular location is the secreted. Its function is as follows. Activates large conductance calcium-activated potassium channels (maxiK, KCNMA1/KCNMB), when tested at micromolar concentrations, suggesting a potential mechanism for regulating host blood supply during feeding. Shows no antiprotease activity, and does not prevent ADP-, PAF- or collagen-induced platelet aggregation. Has no effect on blood coagulation and does not inhibit the alternative or classical complement cascades. The chain is R.appendiculatus Kunitz/BPTI-like protein from Rhipicephalus appendiculatus (Brown ear tick).